Reading from the N-terminus, the 476-residue chain is Light-independent protochlorophyllide reductase subunit N (476 aa).

3 residues coordinate [4Fe-4S] cluster: C31, C56, and C116.

This sequence belongs to the BchN/ChlN family. In terms of assembly, protochlorophyllide reductase is composed of three subunits; ChlL, ChlN and ChlB. Forms a heterotetramer of two ChlB and two ChlN subunits. It depends on [4Fe-4S] cluster as a cofactor.

Its subcellular location is the plastid. The protein resides in the chloroplast. The enzyme catalyses chlorophyllide a + oxidized 2[4Fe-4S]-[ferredoxin] + 2 ADP + 2 phosphate = protochlorophyllide a + reduced 2[4Fe-4S]-[ferredoxin] + 2 ATP + 2 H2O. The protein operates within porphyrin-containing compound metabolism; chlorophyll biosynthesis (light-independent). Functionally, component of the dark-operative protochlorophyllide reductase (DPOR) that uses Mg-ATP and reduced ferredoxin to reduce ring D of protochlorophyllide (Pchlide) to form chlorophyllide a (Chlide). This reaction is light-independent. The NB-protein (ChlN-ChlB) is the catalytic component of the complex. The sequence is that of Light-independent protochlorophyllide reductase subunit N from Staurastrum punctulatum (Green alga).